Here is a 265-residue protein sequence, read N- to C-terminus: MTDALIRLEQVAVTLSGQSVLDNIQLSVKPGEIVTLIGPNGAGKTTLVRAVLGLLKPDSGTVWRKPKLRVGYMPQKLHVDQTLPLSVLRFLRLVPGVDRMAAESALEEVGAEKVIDSPIQGISGGEMQRVLLARALLRKPELLVLDEPVQGVDVAGQAELYGLITRLRDRHQCGVLMVSHDLHLVMSTTDQVVCLNRHVCCSGHPEHVSHDPAFVELFGKNAQSLAIYHHHHDHAHDLHGAVVNDAPATSSHTHTHVHGDHCKHG.

The region spanning 6–221 (IRLEQVAVTL…PAFVELFGKN (216 aa)) is the ABC transporter domain. 38 to 45 (GPNGAGKT) serves as a coordination point for ATP. The interval 245–265 (DAPATSSHTHTHVHGDHCKHG) is disordered.

This sequence belongs to the ABC transporter superfamily. Zinc importer (TC 3.A.1.15.5) family. In terms of assembly, the complex is composed of two ATP-binding proteins (ZnuC), two transmembrane proteins (ZnuB) and a solute-binding protein (ZnuA).

It is found in the cell inner membrane. The catalysed reaction is Zn(2+)(out) + ATP(in) + H2O(in) = Zn(2+)(in) + ADP(in) + phosphate(in) + H(+)(in). Its function is as follows. Part of the ABC transporter complex ZnuABC involved in zinc import. Responsible for energy coupling to the transport system. The chain is Zinc import ATP-binding protein ZnuC from Pseudomonas savastanoi pv. phaseolicola (strain 1448A / Race 6) (Pseudomonas syringae pv. phaseolicola (strain 1448A / Race 6)).